The following is a 449-amino-acid chain: UDP-N-acetylmuramoylalanine--D-glutamate ligase (449 aa).

118-124 (GSNGKTT) is a binding site for ATP.

Belongs to the MurCDEF family.

It localises to the cytoplasm. The catalysed reaction is UDP-N-acetyl-alpha-D-muramoyl-L-alanine + D-glutamate + ATP = UDP-N-acetyl-alpha-D-muramoyl-L-alanyl-D-glutamate + ADP + phosphate + H(+). The protein operates within cell wall biogenesis; peptidoglycan biosynthesis. Functionally, cell wall formation. Catalyzes the addition of glutamate to the nucleotide precursor UDP-N-acetylmuramoyl-L-alanine (UMA). This chain is UDP-N-acetylmuramoylalanine--D-glutamate ligase, found in Leuconostoc citreum (strain KM20).